We begin with the raw amino-acid sequence, 197 residues long: Xanthine phosphoribosyltransferase (197 aa).

Xanthine is bound by residues Leu20 and Asn27. Residue 128-132 coordinates 5-phospho-alpha-D-ribose 1-diphosphate; sequence ANGQA. Lys156 contacts xanthine.

This sequence belongs to the purine/pyrimidine phosphoribosyltransferase family. Xpt subfamily. In terms of assembly, homodimer.

Its subcellular location is the cytoplasm. It carries out the reaction XMP + diphosphate = xanthine + 5-phospho-alpha-D-ribose 1-diphosphate. The protein operates within purine metabolism; XMP biosynthesis via salvage pathway; XMP from xanthine: step 1/1. Functionally, converts the preformed base xanthine, a product of nucleic acid breakdown, to xanthosine 5'-monophosphate (XMP), so it can be reused for RNA or DNA synthesis. This chain is Xanthine phosphoribosyltransferase, found in Bacillus cytotoxicus (strain DSM 22905 / CIP 110041 / 391-98 / NVH 391-98).